The primary structure comprises 1220 residues: Post-transcriptional regulator MKT1L (1220 aa).

The disordered stretch occupies residues M1 to T107. Positions P34 to H70 are enriched in basic residues.

It belongs to the XPG/RAD2 endonuclease family. In terms of assembly, forms a complex composed of at least MKT1L, PBP1, XAC1 and LSM12.

The protein resides in the cytoplasm. Its function is as follows. Involved in post-transcriptional regulation of gene expression. This chain is Post-transcriptional regulator MKT1L, found in Trypanosoma brucei brucei (strain 927/4 GUTat10.1).